Reading from the N-terminus, the 563-residue chain is MLERMIDQGAGREPADIVLKGGRFFDLVTGELVESDIAICGDRIVGTFGNYQGKHEIDISGRIVVPGFIDTHLHIESSHVTPHEFDRCVLPQGVTTVICDPHEIANVLGAEGIKFFLDSALETVMDIRVQLSSCVPATHMETSGAELLIDDLLPFADHPKVIGLAEFMNFPGVLAKDPECMAKLKAFQGRHIDGHAPLLRGLDLNGYISAGIRTEHEATSAEEALEKMRKGMHVLVREGSVSKDLKALMPIITERHAQFLALCTDDRNPLDIADQGHLDYLIRTAIAGGVEPIAIYRAASVSAARAFGLFDRGLVAPGQRADLVVVDSLEGCHAEIVLSAGRVISEDLFAARKTVAPVGRNSVKASKVSASSFRSHSNSGKTRAIGIIPGKIITESLEFDLKVGPNGVEPDFEKDVVKIAVVERHGKNGNIATGFVHGFGLKSGAIASTVSHDSHNICVVGTSDEDIAAAANRLGEIEGGFVVVRDGKVLAEMPLPIAGLMSAEPYETVRDQLRVLRHAAEELGSVLEEPFLQLAFIALPVIPHLKITDRGLVDVDKFAFVGN.

Belongs to the metallo-dependent hydrolases superfamily. Adenine deaminase family. The cofactor is Mn(2+).

It catalyses the reaction adenine + H2O + H(+) = hypoxanthine + NH4(+). This Brucella anthropi (strain ATCC 49188 / DSM 6882 / CCUG 24695 / JCM 21032 / LMG 3331 / NBRC 15819 / NCTC 12168 / Alc 37) (Ochrobactrum anthropi) protein is Adenine deaminase.